The following is a 279-amino-acid chain: FALAHMVNDFDILKSYLDEGANGVETDITFSDEGEPEYAFHGVPCDCKRWCRRTVGFNEYLQHVRDLSTPGNPKFREHFIAIVLDLKLNGLSQEALAHGGMRLADKLIAYYWAHGRNATRITFIVSVPKTSEKVFLKTFLEEIKAVGYDDMLSKVAFDFTDNGDFSETQKVFEGLGIHEHIWASDGITNCIPMLFRGTSRLEDLIRQRDVPGYKYISKVYAWTYDKETSVVKALELGVDGVMTNYADFVIGIINKPEHSSKYRLATYQDNPFEKFVKSA.

His5 is a catalytic residue. Mg(2+) contacts are provided by Glu25 and Asp27. His41 functions as the Nucleophile in the catalytic mechanism. Cystine bridges form between Cys45–Cys51 and Cys47–Cys190. Asp85 provides a ligand contact to Mg(2+).

It belongs to the arthropod phospholipase D family. Class II subfamily. It depends on Mg(2+) as a cofactor. In terms of tissue distribution, expressed by the venom gland.

It localises to the secreted. It catalyses the reaction an N-(acyl)-sphingosylphosphocholine = an N-(acyl)-sphingosyl-1,3-cyclic phosphate + choline. The catalysed reaction is an N-(acyl)-sphingosylphosphoethanolamine = an N-(acyl)-sphingosyl-1,3-cyclic phosphate + ethanolamine. It carries out the reaction a 1-acyl-sn-glycero-3-phosphocholine = a 1-acyl-sn-glycero-2,3-cyclic phosphate + choline. The enzyme catalyses a 1-acyl-sn-glycero-3-phosphoethanolamine = a 1-acyl-sn-glycero-2,3-cyclic phosphate + ethanolamine. Dermonecrotic toxins cleave the phosphodiester linkage between the phosphate and headgroup of certain phospholipids (sphingolipid and lysolipid substrates), forming an alcohol (often choline) and a cyclic phosphate. This toxin acts on sphingomyelin (SM). It may also act on ceramide phosphoethanolamine (CPE), lysophosphatidylcholine (LPC) and lysophosphatidylethanolamine (LPE), but not on lysophosphatidylserine (LPS), and lysophosphatidylglycerol (LPG). It acts by transphosphatidylation, releasing exclusively cyclic phosphate products as second products. Induces dermonecrosis, hemolysis, increased vascular permeability, edema, inflammatory response, and platelet aggregation. The chain is Dermonecrotic toxin LspiSicTox-betaIE3i from Loxosceles spinulosa (Recluse spider).